The chain runs to 566 residues: Alpha-N-acetylgalactosaminide alpha-2,6-sialyltransferase 1 (566 aa).

At 1–16 (MGFLIRRLPKDSRIFR) the chain is on the cytoplasmic side. A helical; Signal-anchor for type II membrane protein membrane pass occupies residues 17-37 (WLLILTVFSFIITSFSALFGM). At 38 to 566 (EKSIFRQLKI…ENIMKLYQRS (529 aa)) the chain is on the lumenal side. N-linked (GlcNAc...) asparagine glycosylation is found at N66 and N132. The tract at residues 138–161 (ASVVERTKEKTTARPVPGVGEADG) is disordered. Residue N192 is glycosylated (N-linked (GlcNAc...) asparagine). Repeat unit 1 spans residues 247–254 (SSSPVSTC). Residues 247–337 (SSSPVSTCSE…ANSSSNVSTC (91 aa)) are 2 X 8 AA repeats of S-S-S-X-V-S-T-C. Disulfide bonds link C254/C337 and C340/C508. N-linked (GlcNAc...) asparagine glycosylation is found at N275, N286, N306, N329, and N333. The stretch at 330-337 (SSSNVSTC) is repeat 2.

It belongs to the glycosyltransferase 29 family. Heart, kidney, testes, brain, liver and lung.

The protein resides in the golgi apparatus membrane. The enzyme catalyses a beta-D-galactosyl-(1-&gt;3)-N-acetyl-alpha-D-galactosaminyl derivative + CMP-N-acetyl-beta-neuraminate = a beta-D-galactosyl-(1-&gt;3)-[N-acetyl-alpha-neuraminyl-(2-&gt;6)]-N-acetyl-alpha-D-galactosaminyl derivative + CMP + H(+). The catalysed reaction is a 3-O-[N-acetyl-alpha-D-galactosaminyl]-L-seryl-[protein] + CMP-N-acetyl-beta-neuraminate = a 3-O-[N-acetyl-alpha-neuraminosyl-(2-&gt;6)-N-acetyl-alpha-D-galactosaminyl]-L-seryl-[protein] + CMP + H(+). It carries out the reaction a 3-O-[N-acetyl-alpha-D-galactosaminyl]-L-threonyl-[protein] + CMP-N-acetyl-beta-neuraminate = a 3-O-[N-acetyl-alpha-neuraminosyl-(2-&gt;6)-N-acetyl-alpha-D-galactosaminyl]-L-threonyl-[protein] + CMP + H(+). It catalyses the reaction a 3-O-[beta-D-galactosyl-(1-&gt;3)-N-acetyl-alpha-D-galactosaminyl]-L-seryl-[protein] + CMP-N-acetyl-beta-neuraminate = a 3-O-{beta-D-galactosyl-(1-&gt;3)-[N-acetyl-alpha-neuraminosyl-(2-&gt;6)]-N-acetyl-alpha-D-galactosaminyl}-L-seryl-[protein] + CMP + H(+). The enzyme catalyses a 3-O-[beta-D-galactosyl-(1-&gt;3)-N-acetyl-alpha-D-galactosaminyl]-L-threonyl-[protein] + CMP-N-acetyl-beta-neuraminate = a 3-O-{beta-D-galactosyl-(1-&gt;3)-[N-acetyl-alpha-neuraminosyl-(2-&gt;6)]-N-acetyl-alpha-D-galactosaminyl}-L-threonyl-[protein] + CMP + H(+). The catalysed reaction is a 3-O-[N-acetyl-alpha-neuraminyl-(2-&gt;3)-beta-D-galactosyl-(1-&gt;3)-N-acetyl-alpha-D-galactosaminyl]-L-threonyl-[protein] + CMP-N-acetyl-beta-neuraminate = a 3-O-{alpha-Neu5Ac-(2-&gt;3)-beta-D-Gal-(1-&gt;3)-[alpha-Neu5Ac-(2-&gt;6)]-alpha-D-GalNAc}-L-threonyl-[protein] + CMP + H(+). It participates in protein modification; protein glycosylation. Functionally, protein sialyltransferase specifically expressed in goblet cells that plays a key role in intestinal host-commensal homeostasis. Conjugates sialic acid with an alpha-2-6 linkage to N-acetylgalactosamine (GalNAc) glycan chains linked to serine or threonine in glycoproteins. Generates sialylated T and Tn antigens.. The sequence is that of Alpha-N-acetylgalactosaminide alpha-2,6-sialyltransferase 1 (ST6GALNAC1) from Gallus gallus (Chicken).